Here is a 250-residue protein sequence, read N- to C-terminus: 3-deoxy-manno-octulosonate cytidylyltransferase (250 aa).

It belongs to the KdsB family.

The protein resides in the cytoplasm. The catalysed reaction is 3-deoxy-alpha-D-manno-oct-2-ulosonate + CTP = CMP-3-deoxy-beta-D-manno-octulosonate + diphosphate. It functions in the pathway nucleotide-sugar biosynthesis; CMP-3-deoxy-D-manno-octulosonate biosynthesis; CMP-3-deoxy-D-manno-octulosonate from 3-deoxy-D-manno-octulosonate and CTP: step 1/1. The protein operates within bacterial outer membrane biogenesis; lipopolysaccharide biosynthesis. In terms of biological role, activates KDO (a required 8-carbon sugar) for incorporation into bacterial lipopolysaccharide in Gram-negative bacteria. The polypeptide is 3-deoxy-manno-octulosonate cytidylyltransferase (Legionella pneumophila (strain Lens)).